The sequence spans 266 residues: Apoptosis regulator ced-9 (266 aa).

The tract at residues 1-58 is disordered; it reads MVDSMDMANSSQNTFRRRTMATSEMREFLSTKDAEPNNFGMQTIPESPTPSTPTRRMS. Residues 24–35 show a composition bias toward basic and acidic residues; the sequence is EMREFLSTKDAE. Positions 75 to 94 match the BH4 motif; the sequence is IQGFVVDYFTYRIAQNGLDW. The short motif at 156-174 is the BH1 element; it reads NTPCPMSYGRLIGLISFGG. The short motif at 208–223 is the BH2 element; sequence SWKEHNRSWADFMKLG.

Belongs to the Bcl-2 family. As to quaternary structure, interacts with asymmetric homodimer ced-4; the interaction sequesters ced-4. Interacts with egl-1; the interaction results in ced-4 release. Interacts with dre-1; the interaction inhibits ced-9 activity, either directly or indirectly. Interacts with dct-1. May form a complex composed of ced-9, ced-4 and mac-1.

It localises to the perikaryon. It is found in the synapse. The protein localises to the endomembrane system. Its subcellular location is the mitochondrion membrane. Its function is as follows. Plays a major role in programmed cell death (PCD, apoptosis). egl-1 binds to and directly inhibits the activity of ced-9, releasing the cell death activator ced-4 from a ced-9/ced-4 containing protein complex and allowing ced-4 to activate the cell-killing caspase ced-3. During larval development, required for the elimination of transient presynaptic components downstream of egl-1 and upstream of ced-4 and ced-3 apoptotic pathway. The protein is Apoptosis regulator ced-9 (ced-9) of Caenorhabditis briggsae.